Reading from the N-terminus, the 94-residue chain is Small ribosomal subunit protein bS6 (94 aa).

It belongs to the bacterial ribosomal protein bS6 family.

Its function is as follows. Binds together with bS18 to 16S ribosomal RNA. This chain is Small ribosomal subunit protein bS6, found in Desulforudis audaxviator (strain MP104C).